The primary structure comprises 38 residues: Photosystem II reaction center protein L (38 aa).

Residues serine 17–phenylalanine 37 traverse the membrane as a helical segment.

Belongs to the PsbL family. In terms of assembly, PSII is composed of 1 copy each of membrane proteins PsbA, PsbB, PsbC, PsbD, PsbE, PsbF, PsbH, PsbI, PsbJ, PsbK, PsbL, PsbM, PsbT, PsbX, PsbY, PsbZ, Psb30/Ycf12, at least 3 peripheral proteins of the oxygen-evolving complex and a large number of cofactors. It forms dimeric complexes.

It is found in the plastid. The protein localises to the chloroplast thylakoid membrane. Functionally, one of the components of the core complex of photosystem II (PSII). PSII is a light-driven water:plastoquinone oxidoreductase that uses light energy to abstract electrons from H(2)O, generating O(2) and a proton gradient subsequently used for ATP formation. It consists of a core antenna complex that captures photons, and an electron transfer chain that converts photonic excitation into a charge separation. This subunit is found at the monomer-monomer interface and is required for correct PSII assembly and/or dimerization. The polypeptide is Photosystem II reaction center protein L (Guillardia theta (Cryptophyte)).